A 467-amino-acid chain; its full sequence is UDP-N-acetylmuramoylalanine--D-glutamate ligase (467 aa).

121-127 (GTNGKST) is a binding site for ATP.

Belongs to the MurCDEF family.

It is found in the cytoplasm. It carries out the reaction UDP-N-acetyl-alpha-D-muramoyl-L-alanine + D-glutamate + ATP = UDP-N-acetyl-alpha-D-muramoyl-L-alanyl-D-glutamate + ADP + phosphate + H(+). The protein operates within cell wall biogenesis; peptidoglycan biosynthesis. Cell wall formation. Catalyzes the addition of glutamate to the nucleotide precursor UDP-N-acetylmuramoyl-L-alanine (UMA). This Brucella suis biovar 1 (strain 1330) protein is UDP-N-acetylmuramoylalanine--D-glutamate ligase.